Consider the following 324-residue polypeptide: tRNA dimethylallyltransferase (324 aa).

ATP is bound at residue 17-24 (GPTASGKT). 19-24 (TASGKT) lines the substrate pocket. Interaction with substrate tRNA regions lie at residues 42 to 45 (DSAL), 166 to 170 (QRIQR), 251 to 256 (RCVGYR), and 284 to 291 (KRQITWLR).

This sequence belongs to the IPP transferase family. In terms of assembly, monomer. The cofactor is Mg(2+).

The enzyme catalyses adenosine(37) in tRNA + dimethylallyl diphosphate = N(6)-dimethylallyladenosine(37) in tRNA + diphosphate. Functionally, catalyzes the transfer of a dimethylallyl group onto the adenine at position 37 in tRNAs that read codons beginning with uridine, leading to the formation of N6-(dimethylallyl)adenosine (i(6)A). This Burkholderia orbicola (strain AU 1054) protein is tRNA dimethylallyltransferase.